We begin with the raw amino-acid sequence, 234 residues long: Sugar fermentation stimulation protein homolog (234 aa).

Belongs to the SfsA family.

The sequence is that of Sugar fermentation stimulation protein homolog from Pseudoalteromonas atlantica (strain T6c / ATCC BAA-1087).